A 125-amino-acid polypeptide reads, in one-letter code: Small ribosomal subunit protein uS13 (125 aa).

Positions proline 97 to lysine 125 are disordered.

It belongs to the universal ribosomal protein uS13 family. Part of the 30S ribosomal subunit. Forms a loose heterodimer with protein S19. Forms two bridges to the 50S subunit in the 70S ribosome.

Its function is as follows. Located at the top of the head of the 30S subunit, it contacts several helices of the 16S rRNA. In the 70S ribosome it contacts the 23S rRNA (bridge B1a) and protein L5 of the 50S subunit (bridge B1b), connecting the 2 subunits; these bridges are implicated in subunit movement. Contacts the tRNAs in the A and P-sites. This Borrelia hermsii (strain HS1 / DAH) protein is Small ribosomal subunit protein uS13.